Here is a 610-residue protein sequence, read N- to C-terminus: Sulfite reductase [NADPH] flavoprotein alpha-component (610 aa).

Residues 68–206 (IIVISASQTG…EVDKWKEKVV (139 aa)) form the Flavodoxin-like domain. Residues 74–79 (SQTGNA), 121–124 (STHG), and 157–166 (LGDRSYEYFA) each bind FMN. Residues 243 to 459 (EFPLIAYLLN…VESNDNFRLP (217 aa)) form the FAD-binding FR-type domain. FAD contacts are provided by residues Thr-331, Ser-365, 397 to 400 (RFYS), 415 to 417 (TVS), Tyr-421, and 430 to 433 (GGAS). Residues 530 to 531 (SR), 536 to 540 (KVYVQ), and Asp-572 contribute to the NADP(+) site. Tyr-610 provides a ligand contact to FAD.

It belongs to the NADPH-dependent sulphite reductase flavoprotein subunit CysJ family. In the N-terminal section; belongs to the flavodoxin family. The protein in the C-terminal section; belongs to the flavoprotein pyridine nucleotide cytochrome reductase family. Alpha(8)-beta(8). The alpha component is a flavoprotein, the beta component is a hemoprotein. It depends on FAD as a cofactor. FMN is required as a cofactor.

It catalyses the reaction hydrogen sulfide + 3 NADP(+) + 3 H2O = sulfite + 3 NADPH + 4 H(+). It participates in sulfur metabolism; hydrogen sulfide biosynthesis; hydrogen sulfide from sulfite (NADPH route): step 1/1. Component of the sulfite reductase complex that catalyzes the 6-electron reduction of sulfite to sulfide. This is one of several activities required for the biosynthesis of L-cysteine from sulfate. The flavoprotein component catalyzes the electron flow from NADPH -&gt; FAD -&gt; FMN to the hemoprotein component. The chain is Sulfite reductase [NADPH] flavoprotein alpha-component from Blochmanniella floridana.